We begin with the raw amino-acid sequence, 399 residues long: Imidazolonepropionase (399 aa).

Fe(3+) is bound by residues histidine 68 and histidine 70. Zn(2+) is bound by residues histidine 68 and histidine 70. 4-imidazolone-5-propanoate is bound by residues arginine 77, tyrosine 140, and histidine 173. Residue tyrosine 140 participates in N-formimidoyl-L-glutamate binding. Histidine 238 contacts Fe(3+). Histidine 238 is a Zn(2+) binding site. Glutamine 241 contacts 4-imidazolone-5-propanoate. Aspartate 313 serves as a coordination point for Fe(3+). Aspartate 313 is a binding site for Zn(2+). Residues asparagine 315 and glycine 317 each coordinate N-formimidoyl-L-glutamate. Residue threonine 318 participates in 4-imidazolone-5-propanoate binding.

It belongs to the metallo-dependent hydrolases superfamily. HutI family. Zn(2+) serves as cofactor. Fe(3+) is required as a cofactor.

Its subcellular location is the cytoplasm. The catalysed reaction is 4-imidazolone-5-propanoate + H2O = N-formimidoyl-L-glutamate. It participates in amino-acid degradation; L-histidine degradation into L-glutamate; N-formimidoyl-L-glutamate from L-histidine: step 3/3. Functionally, catalyzes the hydrolytic cleavage of the carbon-nitrogen bond in imidazolone-5-propanoate to yield N-formimidoyl-L-glutamate. It is the third step in the universal histidine degradation pathway. The chain is Imidazolonepropionase from Rhizorhabdus wittichii (strain DSM 6014 / CCUG 31198 / JCM 15750 / NBRC 105917 / EY 4224 / RW1) (Sphingomonas wittichii).